Reading from the N-terminus, the 377-residue chain is Nucleosome assembly protein 1;2 (377 aa).

Residues 26–80 (VNVLKNKLHDLTGKHSNVTESLSPNVRKRVEALREIQTEHDELEAKFFEERAALE) adopt a coiled-coil conformation. The Nuclear export signal motif lies at 47–62 (LSPNVRKRVEALREIQ). Positions 223 to 228 (KKKPKK) match the Nuclear localization signal motif. The interval 298 to 377 (EAAEDDYAEL…GERPPECKQQ (80 aa)) is disordered. The segment covering 299-342 (AAEDDYAELEDDEDEDDDEEDDEDEDEEEEDEEDDEDEEEDEDE) has biased composition (acidic residues). Cysteine methyl ester is present on cysteine 374. Cysteine 374 carries S-farnesyl cysteine lipidation. The propeptide at 375–377 (KQQ) is removed in mature form.

It belongs to the nucleosome assembly protein (NAP) family. Binds preferentially histone H1 in vitro. Interacts with CYCB1;1.

Its subcellular location is the nucleus. It localises to the cytoplasm. In terms of biological role, may modulate chromatin structure by regulation of nucleosome assembly/disassembly. Could function together with B-type cyclins in the regulation of microtubule dynamics. The protein is Nucleosome assembly protein 1;2 (NAP1;2) of Nicotiana tabacum (Common tobacco).